The chain runs to 231 residues: Ribonuclease HI (231 aa).

Positions 1–146 (MRERAVAACD…ADRAASQAAV (146 aa)) constitute an RNase H type-1 domain. Mg(2+) is bound by residues aspartate 10, glutamate 50, aspartate 72, and aspartate 138. Composition is skewed to low complexity over residues 148–157 (QEAAGSALGS) and 166–181 (VPAA…SGAA). 2 disordered regions span residues 148 to 192 (QEAA…SART) and 212 to 231 (PIAK…VAAG).

The protein belongs to the RNase H family. As to quaternary structure, monomer. Requires Mg(2+) as cofactor.

The protein localises to the cytoplasm. The enzyme catalyses Endonucleolytic cleavage to 5'-phosphomonoester.. Endonuclease that specifically degrades the RNA of RNA-DNA hybrids. The protein is Ribonuclease HI (rnhA) of Streptomyces coelicolor (strain ATCC BAA-471 / A3(2) / M145).